A 731-amino-acid chain; its full sequence is MSRGKKTVERVVELMKDPKHIRNIGIVAHIDHGKTTLSDNLLAGAGIISEELAGKQLFMDSDAEEQARGITIDASNVSMVHEVEGQDYLINMIDTPGHVDFGGDVTRAMRAVDGAVVLVDAVEGTMPQTETVLRQALKEQVRPVLFINKVDRLVNELKVDETEMQIRLGKVIDKVNKLIKGMNEDLYNNGWKLDASKGTVAFGSALYNWAVSVPYMKKGGVSFKDVFEKCRAGDMKYLAKNSPLYEVVLDMVVHHLPNPLEAQPRRVNVIWHGDHSTKEGKAMLACDPNGPATMMVTDISFDPHAGEVATGRLFSGTLRRGDGLYVMGSAKKENRLQQVGIFMGPKRVEVEEIVAGNIAAVTGLKDAIVGSTVTSLMEMSPFESLKHYSEPVMTVAVEAKNMKDLPKLVEVLRQVAKEDPTLGIAINEETGEHLISGMGELHLEIVTGRIKRDKGVEIVTSEPIVVYRETVTGKVEDVEGKSPNRHNRFYFTLEPLPEEIVNLIKAGEITMNQQAIERRDVLLKAGMDKDEAKNVKHIKGTNMLIDMTKGIQYLNETMELIIEGINEALAGGPLADEPVQNLKMTLTDVKLHEDAIHRGPAQVIPAVRGAIKGGMLIAGDSLLEPVQKIQISVPMDQMGAATSQIQGRRGQVFDMQSEGDTITVVGKAPVAELFGFAGDIRSATEGRAMWNTEFAGFELVPNNLVKDVVVAIRKRKGLKEQMPTPSDYLSV.

One can recognise a tr-type G domain in the interval 19–260; it reads KHIRNIGIVA…MVVHHLPNPL (242 aa). Residues 28 to 35, 94 to 98, and 148 to 151 each bind GTP; these read AHIDHGKT, DTPGH, and NKVD. His-597 is modified (diphthamide).

This sequence belongs to the TRAFAC class translation factor GTPase superfamily. Classic translation factor GTPase family. EF-G/EF-2 subfamily.

The protein localises to the cytoplasm. Functionally, catalyzes the GTP-dependent ribosomal translocation step during translation elongation. During this step, the ribosome changes from the pre-translocational (PRE) to the post-translocational (POST) state as the newly formed A-site-bound peptidyl-tRNA and P-site-bound deacylated tRNA move to the P and E sites, respectively. Catalyzes the coordinated movement of the two tRNA molecules, the mRNA and conformational changes in the ribosome. This chain is Elongation factor 2, found in Methanoregula boonei (strain DSM 21154 / JCM 14090 / 6A8).